The primary structure comprises 369 residues: MKSRAAVAFGPGLPLEIVEIDVAPPKKGEVLVKISHTGVCHTDAYTLSGDDPEGLFPVVLGHEGAGVVVEVGEGVTSVKPGDHVIPLYTAECGECDFCTSGKTNLCVAVRETQGKGVMPDATSRFFVNGQPLYHYMGCSTFSEYTVVAEVSLAKINPQANAEQVCLLGCGVTTGIGAVHNTAKVQEGDSVAVFGLGGIGLAVVQGARQAKAGRIFAIDTNPSKFELAKQFGATDCINPNDYDKPVQQVLVEMTKWGVDHTFECIGNVNVMRSALESAHRGWGQSVIIGVAGAGKEISTRPFQLVTGRVWKGTAFGGVKGRTQLPGMVEDAMSGKIELAPFVTHTMELDKINEAFDLMHDGKSIRTVIHY.

The Zn(2+) site is built by Cys40, His62, Cys92, Cys95, Cys98, Cys106, and Cys169.

Belongs to the zinc-containing alcohol dehydrogenase family. Class-III subfamily. As to quaternary structure, homodimer. Zn(2+) is required as a cofactor.

It localises to the cytoplasm. The enzyme catalyses S-(hydroxymethyl)glutathione + NADP(+) = S-formylglutathione + NADPH + H(+). The catalysed reaction is S-(hydroxymethyl)glutathione + NAD(+) = S-formylglutathione + NADH + H(+). It catalyses the reaction a primary alcohol + NAD(+) = an aldehyde + NADH + H(+). It carries out the reaction a secondary alcohol + NAD(+) = a ketone + NADH + H(+). The enzyme catalyses S-nitrosoglutathione + NADH + H(+) = S-(hydroxysulfenamide)glutathione + NAD(+). Functionally, has high formaldehyde dehydrogenase activity in the presence of glutathione and catalyzes the oxidation of normal alcohols in a reaction that is not GSH-dependent. In addition, hemithiolacetals other than those formed from GSH, including omega-thiol fatty acids, also are substrates. Also acts as a S-nitroso-glutathione reductase by catalyzing the NADH-dependent reduction of S-nitrosoglutathione. The polypeptide is S-(hydroxymethyl)glutathione dehydrogenase (frmA) (Photobacterium damsela subsp. piscicida (Pasteurella piscicida)).